A 698-amino-acid chain; its full sequence is Polyribonucleotide nucleotidyltransferase (698 aa).

2 residues coordinate Mg(2+): aspartate 490 and aspartate 496. The KH domain maps to 558–617 (PVIYTMRIPQDKIGALIGPGGKNIKRITETTDTKIDINDDGVVQIAAVNGDKLAMAKAEI). The S1 motif domain maps to 627–695 (NKIYKGKVVS…NNGKVRLSRK (69 aa)).

It belongs to the polyribonucleotide nucleotidyltransferase family. Requires Mg(2+) as cofactor.

Its subcellular location is the cytoplasm. It carries out the reaction RNA(n+1) + phosphate = RNA(n) + a ribonucleoside 5'-diphosphate. Its function is as follows. Involved in mRNA degradation. Catalyzes the phosphorolysis of single-stranded polyribonucleotides processively in the 3'- to 5'-direction. The polypeptide is Polyribonucleotide nucleotidyltransferase (Elusimicrobium minutum (strain Pei191)).